Reading from the N-terminus, the 444-residue chain is Adenylosuccinate synthetase (444 aa).

GTP-binding positions include 12–18 (GDEGKGK) and 40–42 (GHT). Asp13 (proton acceptor) is an active-site residue. Positions 13 and 40 each coordinate Mg(2+). Residues 13-16 (DEGK), 38-41 (NAGH), Thr128, Arg142, Gln223, Thr238, and Arg302 contribute to the IMP site. The Proton donor role is filled by His41. Position 298–304 (298–304 (TTTGRRR)) interacts with substrate. Residues Arg304, 330 to 332 (KLD), and 412 to 414 (SLG) each bind GTP.

The protein belongs to the adenylosuccinate synthetase family. In terms of assembly, homodimer. Mg(2+) serves as cofactor.

Its subcellular location is the cytoplasm. The catalysed reaction is IMP + L-aspartate + GTP = N(6)-(1,2-dicarboxyethyl)-AMP + GDP + phosphate + 2 H(+). Its pathway is purine metabolism; AMP biosynthesis via de novo pathway; AMP from IMP: step 1/2. Functionally, plays an important role in the de novo pathway of purine nucleotide biosynthesis. Catalyzes the first committed step in the biosynthesis of AMP from IMP. This chain is Adenylosuccinate synthetase, found in Synechococcus elongatus (strain ATCC 33912 / PCC 7942 / FACHB-805) (Anacystis nidulans R2).